The following is a 276-amino-acid chain: Large ribosomal subunit protein uL2 (276 aa).

Residues 218 to 276 form a disordered region; the sequence is PYVRGSAMNPVDHPHGGGEGRAPIGRPAPSTPWGKPALGLKTRKKNKKSNKYIVRRRKK. Residues 258–276 show a composition bias toward basic residues; that stretch reads KTRKKNKKSNKYIVRRRKK.

Belongs to the universal ribosomal protein uL2 family. In terms of assembly, part of the 50S ribosomal subunit. Forms a bridge to the 30S subunit in the 70S ribosome.

One of the primary rRNA binding proteins. Required for association of the 30S and 50S subunits to form the 70S ribosome, for tRNA binding and peptide bond formation. It has been suggested to have peptidyltransferase activity; this is somewhat controversial. Makes several contacts with the 16S rRNA in the 70S ribosome. This Finegoldia magna (strain ATCC 29328 / DSM 20472 / WAL 2508) (Peptostreptococcus magnus) protein is Large ribosomal subunit protein uL2.